Here is a 121-residue protein sequence, read N- to C-terminus: Acidic phospholipase A2 PLA-1 (121 aa).

Cystine bridges form between Cys26–Cys115, Cys28–Cys44, Cys43–Cys95, Cys49–Cys121, Cys50–Cys88, Cys57–Cys81, and Cys75–Cys86. Positions 27, 29, and 31 each coordinate Ca(2+). His47 is a catalytic residue. Asp48 contributes to the Ca(2+) binding site. Asp89 is a catalytic residue.

It belongs to the phospholipase A2 family. Group II subfamily. D49 sub-subfamily. Ca(2+) serves as cofactor. Expressed by the venom gland.

Its subcellular location is the secreted. It carries out the reaction a 1,2-diacyl-sn-glycero-3-phosphocholine + H2O = a 1-acyl-sn-glycero-3-phosphocholine + a fatty acid + H(+). Its function is as follows. PLA2 catalyzes the calcium-dependent hydrolysis of the 2-acyl groups in 3-sn-phosphoglycerides. The sequence is that of Acidic phospholipase A2 PLA-1 from Eristicophis macmahoni (Leaf-nosed viper).